A 318-amino-acid chain; its full sequence is tRNA pseudouridine synthase B (318 aa).

The active-site Nucleophile is the Asp-54.

It belongs to the pseudouridine synthase TruB family. Type 1 subfamily.

It carries out the reaction uridine(55) in tRNA = pseudouridine(55) in tRNA. Its function is as follows. Responsible for synthesis of pseudouridine from uracil-55 in the psi GC loop of transfer RNAs. The polypeptide is tRNA pseudouridine synthase B (Ralstonia pickettii (strain 12J)).